The sequence spans 481 residues: FBD-associated F-box protein At5g44490 (481 aa).

Positions 17 to 64 (DLMSKLTDALISQVLFYLPTKEAVSTSVLSSRWKSVWLLIPDLDLNSS) constitute an F-box domain. An FBD domain is found at 370–423 (EKSVSFSSVPQCLLSSLEFVEIKISRFGIISLGIGIARFFVENSVVLKKLVVHS).

The protein is FBD-associated F-box protein At5g44490 of Arabidopsis thaliana (Mouse-ear cress).